Here is a 535-residue protein sequence, read N- to C-terminus: Peptide chain release factor 3 (535 aa).

The tr-type G domain maps to 8–277 (KRRRTFAIIS…TLVELAPPPG (270 aa)). Residues 17–24 (SHPDAGKT), 85–89 (DTPGH), and 139–142 (NKLD) contribute to the GTP site.

It belongs to the TRAFAC class translation factor GTPase superfamily. Classic translation factor GTPase family. PrfC subfamily.

It is found in the cytoplasm. In terms of biological role, increases the formation of ribosomal termination complexes and stimulates activities of RF-1 and RF-2. It binds guanine nucleotides and has strong preference for UGA stop codons. It may interact directly with the ribosome. The stimulation of RF-1 and RF-2 is significantly reduced by GTP and GDP, but not by GMP. This is Peptide chain release factor 3 from Nitrosomonas europaea (strain ATCC 19718 / CIP 103999 / KCTC 2705 / NBRC 14298).